The primary structure comprises 216 residues: Probable transaldolase (216 aa).

The active-site Schiff-base intermediate with substrate is the K83.

It belongs to the transaldolase family. Type 3B subfamily.

The protein resides in the cytoplasm. The catalysed reaction is D-sedoheptulose 7-phosphate + D-glyceraldehyde 3-phosphate = D-erythrose 4-phosphate + beta-D-fructose 6-phosphate. It functions in the pathway carbohydrate degradation; pentose phosphate pathway; D-glyceraldehyde 3-phosphate and beta-D-fructose 6-phosphate from D-ribose 5-phosphate and D-xylulose 5-phosphate (non-oxidative stage): step 2/3. In terms of biological role, transaldolase is important for the balance of metabolites in the pentose-phosphate pathway. The sequence is that of Probable transaldolase from Sorangium cellulosum (strain So ce56) (Polyangium cellulosum (strain So ce56)).